The primary structure comprises 644 residues: Prolyl 3,4-dihydroxylase TPA1 (644 aa).

Positions 141–247 (SKTDMSINTY…RLSIQGWYHI (107 aa)) constitute a Fe2OG dioxygenase domain. Residues His-159 and Asp-161 each coordinate Fe cation. Tyr-173 contacts 2-oxoglutarate. Position 227 (His-227) interacts with Fe cation. Arg-238 lines the 2-oxoglutarate pocket. Ser-607 bears the Phosphoserine mark.

This sequence belongs to the TPA1 family. Monomer and homodimer. Interacts with FRK1, eRF1 (SUP1), eRF3 (SUP35) and polyadenylate-binding protein PAB1. Interacts with ETT1. Requires Fe(2+) as cofactor. L-ascorbate is required as a cofactor.

Its subcellular location is the nucleus. The enzyme catalyses [ribosomal protein uS12]-L-proline + 2-oxoglutarate + O2 = [ribosomal protein uS12]-(3S)-3-hydroxy-L-proline + succinate + CO2. The catalysed reaction is [ribosomal protein uS12]-(3S)-3-hydroxy-L-proline + 2-oxoglutarate + O2 = [ribosomal protein uS12]-(3S)-3,4-dihydroxy-L-proline + succinate + CO2. In terms of biological role, prolyl 3,4-dihydroxylase that catalyzes 3,4-dihydroxylation of 'Pro-64' of small ribosomal subunit uS12 (RPS23A and RPS23B), thereby regulating protein translation termination efficiency. Part of a messenger ribonucleoprotein (mRNP) complex at the 3'-UTR of mRNAs. It associates specifically with components of the translation termination complex and is involved in both translation termination and in regulation of normal mRNA decay through translation termination-coupled poly(A) shortening. The protein is Prolyl 3,4-dihydroxylase TPA1 of Saccharomyces cerevisiae (strain ATCC 204508 / S288c) (Baker's yeast).